The following is a 503-amino-acid chain: Glycerol kinase (503 aa).

Position 14 (Thr-14) interacts with ADP. Thr-14, Thr-15, and Ser-16 together coordinate ATP. Thr-14 lines the sn-glycerol 3-phosphate pocket. Arg-18 is a binding site for ADP. Residues Arg-84, Glu-85, Tyr-136, and Asp-246 each coordinate sn-glycerol 3-phosphate. Positions 84, 85, 136, 246, and 247 each coordinate glycerol. ADP is bound by residues Thr-268 and Gly-311. ATP contacts are provided by Thr-268, Gly-311, Gln-315, and Gly-412. ADP-binding residues include Gly-412 and Asn-416.

This sequence belongs to the FGGY kinase family.

It catalyses the reaction glycerol + ATP = sn-glycerol 3-phosphate + ADP + H(+). It functions in the pathway polyol metabolism; glycerol degradation via glycerol kinase pathway; sn-glycerol 3-phosphate from glycerol: step 1/1. Inhibited by fructose 1,6-bisphosphate (FBP). In terms of biological role, key enzyme in the regulation of glycerol uptake and metabolism. Catalyzes the phosphorylation of glycerol to yield sn-glycerol 3-phosphate. The chain is Glycerol kinase from Haemophilus influenzae (strain 86-028NP).